We begin with the raw amino-acid sequence, 762 residues long: Endonuclease MutS2 (762 aa).

333–340 lines the ATP pocket; the sequence is GVNAGGKT. The 75-residue stretch at 688-762 folds into the Smr domain; the sequence is LDLRGQRSEE…GGSGVKIVKL (75 aa).

This sequence belongs to the DNA mismatch repair MutS family. MutS2 subfamily. Homodimer. Binds to stalled ribosomes, contacting rRNA.

Endonuclease that is involved in the suppression of homologous recombination and thus may have a key role in the control of bacterial genetic diversity. Its function is as follows. Acts as a ribosome collision sensor, splitting the ribosome into its 2 subunits. Detects stalled/collided 70S ribosomes which it binds and splits by an ATP-hydrolysis driven conformational change. Acts upstream of the ribosome quality control system (RQC), a ribosome-associated complex that mediates the extraction of incompletely synthesized nascent chains from stalled ribosomes and their subsequent degradation. Probably generates substrates for RQC. This chain is Endonuclease MutS2, found in Helicobacter pylori (strain J99 / ATCC 700824) (Campylobacter pylori J99).